Here is a 523-residue protein sequence, read N- to C-terminus: Pentatricopeptide repeat-containing protein At3g21470 (523 aa).

13 PPR repeats span residues 10 to 43, 44 to 79, 80 to 114, 115 to 141, 143 to 173, 176 to 210, 211 to 237, 238 to 272, 273 to 307, 308 to 338, 339 to 373, 374 to 408, and 409 to 439; these read GEFH…RGVY, FPGW…GVCS, DVMV…NVAT, WNAM…ISVC, NTVT…MPFE, NVKA…NAFV, WSLM…VFAR, DLVI…GYEP, DAVT…GIEL, NQFV…ISVR, SVAC…DLKP, DEIT…DVKP, and NVKH…MHVK. The tract at residues 444–523 is type E motif; that stretch reads VLGALLGACK…SPGLSSLVLT (80 aa).

This sequence belongs to the PPR family. PCMP-E subfamily.

This chain is Pentatricopeptide repeat-containing protein At3g21470 (PCMP-E29), found in Arabidopsis thaliana (Mouse-ear cress).